Reading from the N-terminus, the 229-residue chain is Ribonuclease 3 (229 aa).

In terms of domain architecture, RNase III spans leucine 8–aspartate 130. Glutamate 43 is a Mg(2+) binding site. Aspartate 47 is a catalytic residue. Mg(2+) contacts are provided by aspartate 116 and glutamate 119. Glutamate 119 is an active-site residue. Positions aspartate 157–glutamate 227 constitute a DRBM domain. Positions serine 201–alanine 229 are disordered.

Belongs to the ribonuclease III family. In terms of assembly, homodimer. Requires Mg(2+) as cofactor.

Its subcellular location is the cytoplasm. The enzyme catalyses Endonucleolytic cleavage to 5'-phosphomonoester.. In terms of biological role, digests double-stranded RNA. Involved in the processing of primary rRNA transcript to yield the immediate precursors to the large and small rRNAs (23S and 16S). Processes some mRNAs, and tRNAs when they are encoded in the rRNA operon. Processes pre-crRNA and tracrRNA of type II CRISPR loci if present in the organism. This Idiomarina loihiensis (strain ATCC BAA-735 / DSM 15497 / L2-TR) protein is Ribonuclease 3.